A 239-amino-acid chain; its full sequence is Purine nucleoside phosphorylase DeoD-type (239 aa).

A purine D-ribonucleoside is bound at residue histidine 5. Phosphate contacts are provided by residues glycine 21, arginine 25, arginine 44, and 88–91; that span reads RVGS. Residues 180-182 and 204-205 contribute to the a purine D-ribonucleoside site; these read EME and SD. The Proton donor role is filled by aspartate 205.

Belongs to the PNP/UDP phosphorylase family. As to quaternary structure, homohexamer; trimer of homodimers.

The enzyme catalyses a purine D-ribonucleoside + phosphate = a purine nucleobase + alpha-D-ribose 1-phosphate. It catalyses the reaction a purine 2'-deoxy-D-ribonucleoside + phosphate = a purine nucleobase + 2-deoxy-alpha-D-ribose 1-phosphate. Catalyzes the reversible phosphorolytic breakdown of the N-glycosidic bond in the beta-(deoxy)ribonucleoside molecules, with the formation of the corresponding free purine bases and pentose-1-phosphate. This Klebsiella pneumoniae (strain 342) protein is Purine nucleoside phosphorylase DeoD-type.